The following is a 243-amino-acid chain: Ribonuclease 3 (243 aa).

Residues 10 to 146 (VNRFRKRFDT…FIGALYLDQG (137 aa)) form the RNase III domain. Glu59 contacts Mg(2+). Residue Asp63 is part of the active site. Mg(2+) contacts are provided by Asp132 and Glu135. Residue Glu135 is part of the active site. In terms of domain architecture, DRBM spans 172 to 241 (DFKTQFQEYV…AKSAYKQLKQ (70 aa)). Positions 219-231 (GKGKTKKESEQRA) are enriched in basic and acidic residues. Residues 219–243 (GKGKTKKESEQRAAKSAYKQLKQIK) form a disordered region.

The protein belongs to the ribonuclease III family. Homodimer. Mg(2+) is required as a cofactor.

It localises to the cytoplasm. It catalyses the reaction Endonucleolytic cleavage to 5'-phosphomonoester.. Digests double-stranded RNA. Involved in the processing of primary rRNA transcript to yield the immediate precursors to the large and small rRNAs (23S and 16S). Processes some mRNAs, and tRNAs when they are encoded in the rRNA operon. Processes pre-crRNA and tracrRNA of type II CRISPR loci if present in the organism. In Staphylococcus aureus (strain Mu3 / ATCC 700698), this protein is Ribonuclease 3.